Here is a 374-residue protein sequence, read N- to C-terminus: UDP-N-acetylglucosamine--N-acetylmuramyl-(pentapeptide) pyrophosphoryl-undecaprenol N-acetylglucosamine transferase (374 aa).

Residues 10–12 (TGG), asparagine 124, arginine 166, serine 196, and glutamine 294 contribute to the UDP-N-acetyl-alpha-D-glucosamine site.

This sequence belongs to the glycosyltransferase 28 family. MurG subfamily.

It is found in the cell membrane. The enzyme catalyses di-trans,octa-cis-undecaprenyl diphospho-N-acetyl-alpha-D-muramoyl-L-alanyl-D-glutamyl-meso-2,6-diaminopimeloyl-D-alanyl-D-alanine + UDP-N-acetyl-alpha-D-glucosamine = di-trans,octa-cis-undecaprenyl diphospho-[N-acetyl-alpha-D-glucosaminyl-(1-&gt;4)]-N-acetyl-alpha-D-muramoyl-L-alanyl-D-glutamyl-meso-2,6-diaminopimeloyl-D-alanyl-D-alanine + UDP + H(+). Its pathway is cell wall biogenesis; peptidoglycan biosynthesis. Cell wall formation. Catalyzes the transfer of a GlcNAc subunit on undecaprenyl-pyrophosphoryl-MurNAc-pentapeptide (lipid intermediate I) to form undecaprenyl-pyrophosphoryl-MurNAc-(pentapeptide)GlcNAc (lipid intermediate II). This is UDP-N-acetylglucosamine--N-acetylmuramyl-(pentapeptide) pyrophosphoryl-undecaprenol N-acetylglucosamine transferase from Symbiobacterium thermophilum (strain DSM 24528 / JCM 14929 / IAM 14863 / T).